The following is a 339-amino-acid chain: MKFLDQAKVYVRSGSGGAGAVSFRREKFIEFGGPDGGNGGRGGDVWALVVDGLNTLIDYRYQQHFRAKNGGHGKGRNMTGAKGDDVVLRVPVGTQIFEEDNKTLICDLTEVGQRYCLAKGGNGGFGNLHFVTSTNRAPRRANPGLSGEERALWLRLKLIADGGIIGLPNAGKSTFLASVTTAKPKIAAYPFTTLYPHLGVARIDAREFVLADIPGLIEGAHEGVGIGDRFLGHVERCRVLLHLISIQEEDVVKAYQIIRRELETYGNNLSDKTEIVALSQVDTLPIEECKAKQEALQKSVGQPVMMFSAVSHEGLDNVLRSVAHVIEMARADMINKHQD.

Residues 1–159 (MKFLDQAKVY…RALWLRLKLI (159 aa)) form the Obg domain. The region spanning 160–327 (ADGGIIGLPN…VLRSVAHVIE (168 aa)) is the OBG-type G domain. GTP-binding positions include 166 to 173 (GLPNAGKS), 191 to 195 (FTTLY), 212 to 215 (DIPG), 279 to 282 (SQVD), and 308 to 310 (SAV). Mg(2+) contacts are provided by S173 and T193.

It belongs to the TRAFAC class OBG-HflX-like GTPase superfamily. OBG GTPase family. Monomer. Requires Mg(2+) as cofactor.

It localises to the cytoplasm. An essential GTPase which binds GTP, GDP and possibly (p)ppGpp with moderate affinity, with high nucleotide exchange rates and a fairly low GTP hydrolysis rate. Plays a role in control of the cell cycle, stress response, ribosome biogenesis and in those bacteria that undergo differentiation, in morphogenesis control. The chain is GTPase Obg from Bartonella bacilliformis (strain ATCC 35685 / KC583 / Herrer 020/F12,63).